We begin with the raw amino-acid sequence, 257 residues long: Dof zinc finger protein DOF5.3 (257 aa).

The segment at 23-50 is disordered; sequence LSYSSNPTPLDNDQKKPSPATAVTRPQP. The span at 24 to 33 shows a compositional bias: polar residues; that stretch reads SYSSNPTPLD. A Dof-type zinc finger spans residues 55-109; sequence LRCPRCDSTNTKFCYYNNYSLTQPRYFCKSCRRYWTKGGTLRNIPVGGGCRKNKR. 4 residues coordinate Zn(2+): Cys57, Cys60, Cys82, and Cys85. The segment at 104-127 is disordered; that stretch reads CRKNKRSTSSAARSLRTTPEPASH. Positions 110–121 are enriched in low complexity; that stretch reads STSSAARSLRTT.

In terms of tissue distribution, the PEAR proteins (e.g. DOF2.4, DOF5.1, DOF3.2, DOF1.1, DOF5.6 and DOF5.3) form a short-range concentration gradient that peaks at protophloem sieve elements (PSE). Accumulates in the stele.

Its subcellular location is the nucleus. Functionally, transcription factor that binds specifically to a 5'-AA[AG]G-3' consensus core sequence. The PEAR proteins (e.g. DOF2.4, DOF5.1, DOF3.2, DOF1.1, DOF5.6 and DOF5.3) activate gene expression that promotes radial growth of protophloem sieve elements. This Arabidopsis thaliana (Mouse-ear cress) protein is Dof zinc finger protein DOF5.3.